The chain runs to 249 residues: MAVQGPWVGSSYVAETGQNWASLAANELRVTERPFWISSFIGRSKEEIWEWTGENHSFNKDWLIGELRNRGGTPVVINIRAHQVSYTPGAPLFEFPGDLPNAYITLNIYADIYGRGGTGGVAYLGGNPGGDCIHNWIGNRLRINNQGWICGGGGGGGGFRVGHTEAGGGGGRPLGAGGVSSLNLNGDNATLGAPGRGYQLGNDYAGNGGDVGNPGSASSAEMGGGAAGRAVVGTSPQWINVGNIAGSWL.

10 consecutive short sequence motifs (GRM) follow at residues 114 to 121 (GRGGTGGV), 124 to 131 (LGGNPGGD), 151 to 161 (GGGGGGGGFRV), 164 to 172 (TEAGGGGGR), 175 to 181 (GAGGVSS), 184 to 190 (LNGDNAT), 192 to 199 (GAPGRGYQ), 204 to 210 (YAGNGGD), 213 to 218 (NPGSAS), and 222 to 229 (MGGGAAGR).

This sequence belongs to the S16-like receptor-recognizing protein gp38 family. Interacts with host OmpC receptor; this interaction allows the reversible adsorption of the phage on the host membrane.

The protein resides in the virion. Its function is as follows. Receptor binding protein (RBP) that is at the tip of the long tail fibers and serves as the phage recognition site for the attachment host receptor OmpC. The protein is Receptor-recognizing protein gp38 of Salmonella enterica (Salmonella choleraesuis).